Reading from the N-terminus, the 86-residue chain is Neurotoxin LmNaTx34.1 (86 aa).

The N-terminal stretch at 1–18 (MKTVILVVIALMVIEVQG) is a signal peptide. One can recognise an LCN-type CS-alpha/beta domain in the interval 19-85 (DGYLMVRAGI…IWTYEKNTCS (67 aa)). Intrachain disulfides connect Cys32–Cys84, Cys36–Cys57, Cys43–Cys64, and Cys47–Cys66.

It belongs to the long (4 C-C) scorpion toxin superfamily. Sodium channel inhibitor family. Beta subfamily. In terms of tissue distribution, expressed by the venom gland.

The protein localises to the secreted. Its function is as follows. Binds voltage-independently at site-4 of sodium channels (Nav) and shift the voltage of activation toward more negative potentials thereby affecting sodium channel activation and promoting spontaneous and repetitive firing. This chain is Neurotoxin LmNaTx34.1, found in Lychas mucronatus (Chinese swimming scorpion).